A 324-amino-acid polypeptide reads, in one-letter code: MARSKISVIGAGAVGATVAQTLAIRQTGDIYIFDIVDGLAEGKALDILEGAPHWGYDLDIKGFCTADESKYAEMKGSDVIVVTAGLARKPGMSRDDLLLKNIGIMKSVGEAIKKYSPESKIVVVTNPADIMAYAIYKASGISPERIIGLGGSLDSTRFRTFLAQELNVSFEDVNAFVIGGHGDDMVPFIRYSNVSGIPIEDLLPREKIDEIVKRTRFGGGEIVNLYKTGSAFYAPGISIAVMVESIVNDRKRVIPCAAYITGEHSKTYLVNNLFIGVPIKIGKNGVEKIYDLKFNEDELEAWKKSVESVKKNSAIADDYFAKNQ.

NAD(+) contacts are provided by residues 10 to 15 and D34; that span reads GAGAVG. R88 and R94 together coordinate substrate. Residues N101 and 124-126 contribute to the NAD(+) site; that span reads VTN. Substrate-binding residues include N126 and R157. Residue H181 is the Proton acceptor of the active site.

It belongs to the LDH/MDH superfamily.

The catalysed reaction is (S)-malate + NAD(+) = oxaloacetate + NADH + H(+). Functionally, catalyzes the reversible oxidation of malate to oxaloacetate. In Picrophilus torridus (strain ATCC 700027 / DSM 9790 / JCM 10055 / NBRC 100828 / KAW 2/3), this protein is Malate dehydrogenase (mdh).